The sequence spans 104 residues: Protein P-30 (104 aa).

Q1 is subject to Pyrrolidone carboxylic acid. The active-site Proton acceptor is H10. 4 cysteine pairs are disulfide-bonded: C19–C68, C30–C75, C48–C90, and C87–C104. 31 to 35 is a substrate binding site; sequence KDKNT. The Proton donor role is filled by H97.

The protein belongs to the pancreatic ribonuclease family.

Basic protein with antiproliferative/cytotoxic activity against several tumor cell lines in vitro, as well as antitumor in vivo. It exhibits a ribonuclease-like activity against high molecular weight ribosomal RNA. The polypeptide is Protein P-30 (Lithobates pipiens (Northern leopard frog)).